Consider the following 251-residue polypeptide: Ubiquinone/menaquinone biosynthesis C-methyltransferase UbiE (251 aa).

S-adenosyl-L-methionine contacts are provided by residues T74, D95, 123–124 (NA), and S140.

The protein belongs to the class I-like SAM-binding methyltransferase superfamily. MenG/UbiE family.

It catalyses the reaction a 2-demethylmenaquinol + S-adenosyl-L-methionine = a menaquinol + S-adenosyl-L-homocysteine + H(+). The catalysed reaction is a 2-methoxy-6-(all-trans-polyprenyl)benzene-1,4-diol + S-adenosyl-L-methionine = a 5-methoxy-2-methyl-3-(all-trans-polyprenyl)benzene-1,4-diol + S-adenosyl-L-homocysteine + H(+). Its pathway is quinol/quinone metabolism; menaquinone biosynthesis; menaquinol from 1,4-dihydroxy-2-naphthoate: step 2/2. It participates in cofactor biosynthesis; ubiquinone biosynthesis. Functionally, methyltransferase required for the conversion of demethylmenaquinol (DMKH2) to menaquinol (MKH2) and the conversion of 2-polyprenyl-6-methoxy-1,4-benzoquinol (DDMQH2) to 2-polyprenyl-3-methyl-6-methoxy-1,4-benzoquinol (DMQH2). This is Ubiquinone/menaquinone biosynthesis C-methyltransferase UbiE from Serratia proteamaculans (strain 568).